A 119-amino-acid polypeptide reads, in one-letter code: MSQVDKTARRQKIKARSRAVVRGTQERPRLCVFRSLSQIYAQLIDDESGKTLMAASSMSKENAGLTGTKSEVSAAIGKQIAEKALAQGISRVVFDRNGFRYHGRIKALADGAREAGLIF.

This sequence belongs to the universal ribosomal protein uL18 family. Part of the 50S ribosomal subunit; part of the 5S rRNA/L5/L18/L25 subcomplex. Contacts the 5S and 23S rRNAs.

Functionally, this is one of the proteins that bind and probably mediate the attachment of the 5S RNA into the large ribosomal subunit, where it forms part of the central protuberance. The sequence is that of Large ribosomal subunit protein uL18 from Chlorobaculum tepidum (strain ATCC 49652 / DSM 12025 / NBRC 103806 / TLS) (Chlorobium tepidum).